We begin with the raw amino-acid sequence, 551 residues long: ATP-dependent DNA helicase XPD (551 aa).

Residues 1–228 (MLKLRDWQEK…KLLNQLREVV (228 aa)) form the Helicase ATP-binding domain. Residue 29–36 (APTGSGKT) participates in ATP binding. [4Fe-4S] cluster contacts are provided by Cys-88, Cys-102, Cys-105, and Cys-137. The short motif at 180 to 183 (DEAH) is the DEAH box element.

Belongs to the helicase family. RAD3/XPD subfamily. As to quaternary structure, monomer. The cofactor is [4Fe-4S] cluster.

It catalyses the reaction Couples ATP hydrolysis with the unwinding of duplex DNA at the replication fork by translocating in the 5'-3' direction. This creates two antiparallel DNA single strands (ssDNA). The leading ssDNA polymer is the template for DNA polymerase III holoenzyme which synthesizes a continuous strand.. The enzyme catalyses ATP + H2O = ADP + phosphate + H(+). ATP-dependent 5'-3' DNA helicase. Thought to be involved in nucleotide excision repair (NER) of DNA. The protein is ATP-dependent DNA helicase XPD of Sulfolobus acidocaldarius (strain ATCC 33909 / DSM 639 / JCM 8929 / NBRC 15157 / NCIMB 11770).